The primary structure comprises 475 residues: Adenylyl cyclase-associated protein 1 (475 aa).

A2 is subject to N-acetylalanine. Y31 carries the post-translational modification Phosphotyrosine. S34 is modified (phosphoserine). K81 is modified (N6-acetyllysine). 2 disordered regions span residues 216 to 255 (ELSG…ASRS) and 278 to 318 (MKTH…TKKE). Over residues 218–228 (SGLPSGPSAGS) the composition is skewed to low complexity. Over residues 229-242 (GPPPPPPGPPPPPV) the composition is skewed to pro residues. The segment covering 243–255 (STSSGSDESASRS) has biased composition (low complexity). K287 carries the N6-methyllysine modification. S290, S295, and S301 each carry phosphoserine. T307 carries the post-translational modification Phosphothreonine. Residues S308 and S310 each carry the phosphoserine modification. Positions 313–453 (PATKKEPAVL…EGGDFNEFPV (141 aa)) constitute a C-CAP/cofactor C-like domain. K348 participates in a covalent cross-link: Glycyl lysine isopeptide (Lys-Gly) (interchain with G-Cter in SUMO1).

It belongs to the CAP family. In terms of assembly, homodimer. Binds actin monomers.

It is found in the cell membrane. Functionally, directly regulates filament dynamics and has been implicated in a number of complex developmental and morphological processes, including mRNA localization and the establishment of cell polarity. The sequence is that of Adenylyl cyclase-associated protein 1 (CAP1) from Pongo abelii (Sumatran orangutan).